Consider the following 348-residue polypeptide: 3'-dehydrocarminate deglycosidase alpha subunit (348 aa).

Residue E145 participates in Mg(2+) binding. Residue H147 is the Proton acceptor of the active site. Mg(2+) contacts are provided by D177, H275, and E311.

The protein belongs to the C-glycoside deglycosidase alpha subunit family. In terms of assembly, heterodimer composed of an alpha subunit (CarB) and a beta subunit (CarC). It depends on Mg(2+) as a cofactor.

The catalysed reaction is 3'-dehydrocarminate + H(+) = kermesate + 1,5-anhydro-D-erythro-hex-1-en-3-ulose. Its activity is regulated as follows. Activity is strongly reduced in the presence of chelating agents. Its function is as follows. Carbon-carbon bond-cleaving enzyme which participates in a carminate degradation pathway. Cleaves the C-C bond in 3'-dehydrocarminate to form kermesate. Also shows weak activity with other C-glycosides, such as 3''-dehydropuerarin (3''-oxo-puerarin), 3''-dehydroisoorientin (3''-oxo-homoorientin) and 3'-dehydromangiferin (3'-oxo-mangiferin). This Microbacterium sp protein is 3'-dehydrocarminate deglycosidase alpha subunit.